The chain runs to 139 residues: Aspartate 1-decarboxylase (139 aa).

The Schiff-base intermediate with substrate; via pyruvic acid role is filled by Ser-25. Position 25 is a pyruvic acid (Ser) (Ser-25). Substrate is bound at residue Thr-57. Residue Tyr-58 is the Proton donor of the active site. 73–75 (GAA) is a substrate binding site. Residues 117–139 (TGSDPADAPAGSGLLRGDRPAGR) form a disordered region.

It belongs to the PanD family. Heterooctamer of four alpha and four beta subunits. Requires pyruvate as cofactor. Is synthesized initially as an inactive proenzyme, which is activated by self-cleavage at a specific serine bond to produce a beta-subunit with a hydroxyl group at its C-terminus and an alpha-subunit with a pyruvoyl group at its N-terminus.

It is found in the cytoplasm. The enzyme catalyses L-aspartate + H(+) = beta-alanine + CO2. It participates in cofactor biosynthesis; (R)-pantothenate biosynthesis; beta-alanine from L-aspartate: step 1/1. Its function is as follows. Catalyzes the pyruvoyl-dependent decarboxylation of aspartate to produce beta-alanine. The protein is Aspartate 1-decarboxylase of Nocardioides sp. (strain ATCC BAA-499 / JS614).